Reading from the N-terminus, the 708-residue chain is Elongation factor G 1 (708 aa).

A tr-type G domain is found at 9–295 (AKVRNIGIMA…AVVRYLPTPL (287 aa)). GTP is bound by residues 18–25 (AHIDAGKT), 86–90 (DTPGH), and 140–143 (NKLD).

The protein belongs to the TRAFAC class translation factor GTPase superfamily. Classic translation factor GTPase family. EF-G/EF-2 subfamily.

The protein localises to the cytoplasm. In terms of biological role, catalyzes the GTP-dependent ribosomal translocation step during translation elongation. During this step, the ribosome changes from the pre-translocational (PRE) to the post-translocational (POST) state as the newly formed A-site-bound peptidyl-tRNA and P-site-bound deacylated tRNA move to the P and E sites, respectively. Catalyzes the coordinated movement of the two tRNA molecules, the mRNA and conformational changes in the ribosome. The polypeptide is Elongation factor G 1 (fusA) (Streptomyces coelicolor (strain ATCC BAA-471 / A3(2) / M145)).